The sequence spans 911 residues: MSPEGKEMRYRISDIARELQVSPQEVLHFVKEAGGKVASTSSMVKGPMRDLILDQFSDEKKLVDETRKIREEKQLRLSRLEEQSRKTYEKEQQLKDTISGRPERAAAKPRTEVPSESVEPEPVKEMPETVAEPEVTGVVSEPDENVAAVAEEVKSPVEETSETVAEKNDVEGQVSYEVPQKIGGLTVFGTLDVQSSLGMGGEADKKKQRKKRFKEQADELKDEFDIKAKEGGKEREAGGESRKPVKKGSEETKKTTVESTSAKKKKGKKKKKPEVDEKTIEKNIRSTISGMDDTSGSGSSRQKFRKMRKIEREKELEEAEAIKEAERSIIRVTEFATAHELADLMGILPKEIIQHCFTMGKFVTINQRLDKETIELVAMEFGFDAEFVSEVEATEVTEIEDEEEELEIRPPVVTIMGHVDHGKTSLLDYIRSSNVVAGESGGITQHIGAYEVSLDGDRKITFLDTPGHEAFTAMRARGAQVTDIVILVVSADDSVMPQTVEAINHSKAAGVPIVVAINKIDKPDANPEKIKTQLSEAGVLVEDWGGEYQCQEISAKQGTGIDALMEKVLTEAEIRELKANFSEDVPSRGIIVEAELDKGKGVVSTVLVQRGFLKVGDPFVAGHTMGKVRALMDERGKRIREAGPSQPVSVLGFEDLPQSGDLFTVMPSDREAREIAQKRQIIRREHEFRRSTRVKLDSIARQIKEGLMKELSVILKADTDGSIQALADGLMKIHNDEVKVQIIHQGVGQITETDVLLAAASDAIIIGFRVRPNVNAKRLAEKEDLDVRFYSVIYHVIEDIEQALEGMLSPELHEESIGSLEIRQVFKVPKIGNVAGCYMLEGKIFRDSKVRLLRDGVQIYDGVLDSLKRFKDDVKEVDAGYECGLNLKGYSDIKVGDIVEGYRIVEKKRKL.

Basic and acidic residues-rich tracts occupy residues 80–94 (LEEQ…EQQL) and 101–113 (RPER…RTEV). 3 disordered regions span residues 80-142 (LEEQ…VSEP), 153-172 (VKSP…DVEG), and 195-309 (SSLG…KMRK). The segment covering 214-256 (KEQADELKDEFDIKAKEGGKEREAGGESRKPVKKGSEETKKTT) has biased composition (basic and acidic residues). Positions 262–272 (AKKKKGKKKKK) are enriched in basic residues. The segment covering 273 to 284 (PEVDEKTIEKNI) has biased composition (basic and acidic residues). The segment covering 286 to 300 (STISGMDDTSGSGSS) has biased composition (low complexity). Positions 408-578 (IRPPVVTIMG…LTEAEIRELK (171 aa)) constitute a tr-type G domain. Positions 417 to 424 (GHVDHGKT) are G1. Residue 417–424 (GHVDHGKT) participates in GTP binding. Residues 442–446 (GITQH) are G2. A G3 region spans residues 464-467 (DTPG). GTP contacts are provided by residues 464-468 (DTPGH) and 518-521 (NKID). Positions 518–521 (NKID) are G4. Positions 554-556 (SAK) are G5.

The protein belongs to the TRAFAC class translation factor GTPase superfamily. Classic translation factor GTPase family. IF-2 subfamily.

It localises to the cytoplasm. In terms of biological role, one of the essential components for the initiation of protein synthesis. Protects formylmethionyl-tRNA from spontaneous hydrolysis and promotes its binding to the 30S ribosomal subunits. Also involved in the hydrolysis of GTP during the formation of the 70S ribosomal complex. This is Translation initiation factor IF-2 from Chlorobium phaeobacteroides (strain BS1).